Reading from the N-terminus, the 241-residue chain is MKVLLVFDFDNTIIDDNSDTWIIQCAPDKKLPIELQDSYQKGLWTEFMGRVFKYLRDEGVKEEELKRAVTSLPFTSGMIELLSFLRMNKDRFDCIIISDSNSIFIDWVLEAAAFHDVFDTVFTNPASFDSTGRLTVRNCHTHACTRCPKNLCKNTVLGEFIDKQLQKGVRYTRIVYIGDGGNDVCPVTFLKKNDVAMPREGYTLHRTLDKMSQNLEPMASSIVVWSSGMEIISHLQFLIQM.

Residue aspartate 8 is the Nucleophile of the active site. Residues aspartate 8 and aspartate 10 each contribute to the Mg(2+) site. Residue aspartate 10 is the Proton donor of the active site. Residues aspartate 19 and aspartate 99 each contribute to the substrate site. Aspartate 179 contributes to the Mg(2+) binding site.

Belongs to the HAD-like hydrolase superfamily. PHOSPHO family. Mg(2+) is required as a cofactor.

The catalysed reaction is pyridoxal 5'-phosphate + H2O = pyridoxal + phosphate. In terms of biological role, phosphatase that has high activity toward pyridoxal 5'-phosphate (PLP). Also active at much lower level toward pyrophosphate, phosphoethanolamine (PEA), phosphocholine (PCho), phospho-l-tyrosine, fructose-6-phosphate, p-nitrophenyl phosphate, and h-glycerophosphate. The polypeptide is Pyridoxal phosphate phosphatase PHOSPHO2 (Phospho2) (Rattus norvegicus (Rat)).